The primary structure comprises 217 residues: Peptide methionine sulfoxide reductase MsrA (217 aa).

The segment at 16-39 is disordered; it reads EALKGGRHPVLESPQPHTVLGTPI. Residue Cys56 is part of the active site.

Belongs to the MsrA Met sulfoxide reductase family.

It catalyses the reaction L-methionyl-[protein] + [thioredoxin]-disulfide + H2O = L-methionyl-(S)-S-oxide-[protein] + [thioredoxin]-dithiol. It carries out the reaction [thioredoxin]-disulfide + L-methionine + H2O = L-methionine (S)-S-oxide + [thioredoxin]-dithiol. In terms of biological role, has an important function as a repair enzyme for proteins that have been inactivated by oxidation. Catalyzes the reversible oxidation-reduction of methionine sulfoxide in proteins to methionine. The sequence is that of Peptide methionine sulfoxide reductase MsrA from Corynebacterium efficiens (strain DSM 44549 / YS-314 / AJ 12310 / JCM 11189 / NBRC 100395).